The chain runs to 141 residues: Hemoglobin subunit alpha (141 aa).

Positions 1–141 constitute a Globin domain; the sequence is VLSAADKGNV…VSTVLTSKYR (141 aa). Serine 3 is modified (phosphoserine). 2 positions are modified to N6-succinyllysine: lysine 7 and lysine 11. An N6-acetyllysine; alternate modification is found at lysine 16. Lysine 16 carries the N6-succinyllysine; alternate modification. Tyrosine 24 carries the phosphotyrosine modification. Serine 35 carries the phosphoserine modification. Lysine 40 carries the N6-succinyllysine modification. Residue histidine 58 participates in O2 binding. Position 87 (histidine 87) interacts with heme b. A Phosphoserine modification is found at serine 102. Threonine 108 carries the phosphothreonine modification. Residues serine 124 and serine 131 each carry the phosphoserine modification. 2 positions are modified to phosphothreonine: threonine 134 and threonine 137. Serine 138 carries the phosphoserine modification.

The protein belongs to the globin family. In terms of assembly, heterotetramer of two alpha chains and two beta chains. As to expression, red blood cells.

Functionally, involved in oxygen transport from the lung to the various peripheral tissues. In terms of biological role, hemopressin acts as an antagonist peptide of the cannabinoid receptor CNR1. Hemopressin-binding efficiently blocks cannabinoid receptor CNR1 and subsequent signaling. The polypeptide is Hemoglobin subunit alpha (HBA) (Macrotus californicus (Californian leaf-nosed bat)).